We begin with the raw amino-acid sequence, 282 residues long: ATP phosphoribosyltransferase (282 aa).

The protein belongs to the ATP phosphoribosyltransferase family. Long subfamily. It depends on Mg(2+) as a cofactor.

The protein resides in the cytoplasm. It catalyses the reaction 1-(5-phospho-beta-D-ribosyl)-ATP + diphosphate = 5-phospho-alpha-D-ribose 1-diphosphate + ATP. The protein operates within amino-acid biosynthesis; L-histidine biosynthesis; L-histidine from 5-phospho-alpha-D-ribose 1-diphosphate: step 1/9. Its activity is regulated as follows. Feedback inhibited by histidine. Catalyzes the condensation of ATP and 5-phosphoribose 1-diphosphate to form N'-(5'-phosphoribosyl)-ATP (PR-ATP). Has a crucial role in the pathway because the rate of histidine biosynthesis seems to be controlled primarily by regulation of HisG enzymatic activity. The chain is ATP phosphoribosyltransferase from Pyrobaculum aerophilum (strain ATCC 51768 / DSM 7523 / JCM 9630 / CIP 104966 / NBRC 100827 / IM2).